We begin with the raw amino-acid sequence, 120 residues long: Large ribosomal subunit protein uL18 (120 aa).

The protein belongs to the universal ribosomal protein uL18 family. Part of the 50S ribosomal subunit; part of the 5S rRNA/L5/L18/L25 subcomplex. Contacts the 5S and 23S rRNAs.

This is one of the proteins that bind and probably mediate the attachment of the 5S RNA into the large ribosomal subunit, where it forms part of the central protuberance. The protein is Large ribosomal subunit protein uL18 of Staphylococcus carnosus (strain TM300).